Reading from the N-terminus, the 1069-residue chain is Regulator of nonsense transcripts 1 (1069 aa).

Residues 1-86 (MDDSDDEYSR…SEKSLTEEQH (86 aa)) form a disordered region. The span at 28–50 (IGNTQDSQFAYEQFSVPTQSSQA) shows a compositional bias: polar residues. The span at 51–65 (TDLLPGGTDGTTNDL) shows a compositional bias: low complexity. Residues 77–86 (SEKSLTEEQH) are compositionally biased toward basic and acidic residues. In terms of domain architecture, Upf1 CH-rich spans 87 to 244 (EQKLPEHACR…VRMEELWRDH (158 aa)). Positions 95, 98, 109, 112, 117, 127, 131, 137, 155, 158, 181, and 185 each coordinate Zn(2+). The interval 95 to 127 (CRYCGISDPLCVAKCTVCRKWFCNSNDGTSGGH) is C3H. A CC/SHH/C region spans residues 109–137 (CTVCRKWFCNSNDGTSGGHIVHHMVRSQH). A C4 region spans residues 155–185 (CYRCGSKNVFNLGFIPGKKDQVVVIICRTPC). ATP is bound by residues Gln-450, 467–474 (GPPGTGKT), Gln-639, Tyr-676, and Glu-807. Residues 966-1069 (ARNQKDRRRG…MDDLLFSQDC (104 aa)) are disordered. Over residues 991–1013 (SQGMMSQQSQQYPPQGASSQSQY) the composition is skewed to low complexity.

It belongs to the DNA2/NAM7 helicase family. In terms of processing, phosphorylated probably by smg-1. Smg-3 and smg-4 are required for phosphorylation.

It is found in the cytoplasm. It carries out the reaction ATP + H2O = ADP + phosphate + H(+). In terms of biological role, RNA-dependent helicase required for nonsense-mediated decay (NMD) of aberrant mRNAs containing premature stop codons and modulates the expression level of normal mRNAs. Is recruited to mRNAs upon translation termination and undergoes a cycle of phosphorylation and dephosphorylation; its phosphorylation appears to be a key step in NMD. The formation of an smg-2-3-4 surveillance complex is believed to activate NMD. This is Regulator of nonsense transcripts 1 (smg-2) from Caenorhabditis elegans.